Reading from the N-terminus, the 435-residue chain is Glutamate-1-semialdehyde 2,1-aminomutase (435 aa).

Lysine 266 is subject to N6-(pyridoxal phosphate)lysine.

Belongs to the class-III pyridoxal-phosphate-dependent aminotransferase family. HemL subfamily. In terms of assembly, homodimer. Pyridoxal 5'-phosphate serves as cofactor.

It localises to the cytoplasm. The catalysed reaction is (S)-4-amino-5-oxopentanoate = 5-aminolevulinate. Its pathway is porphyrin-containing compound metabolism; protoporphyrin-IX biosynthesis; 5-aminolevulinate from L-glutamyl-tRNA(Glu): step 2/2. The protein is Glutamate-1-semialdehyde 2,1-aminomutase of Coxiella burnetii (strain CbuK_Q154) (Coxiella burnetii (strain Q154)).